Consider the following 121-residue polypeptide: Large ribosomal subunit protein uL18 (121 aa).

This sequence belongs to the universal ribosomal protein uL18 family. In terms of assembly, part of the 50S ribosomal subunit; part of the 5S rRNA/L5/L18/L25 subcomplex. Contacts the 5S and 23S rRNAs.

In terms of biological role, this is one of the proteins that bind and probably mediate the attachment of the 5S RNA into the large ribosomal subunit, where it forms part of the central protuberance. The polypeptide is Large ribosomal subunit protein uL18 (Bordetella avium (strain 197N)).